We begin with the raw amino-acid sequence, 362 residues long: 3-isopropylmalate dehydrogenase (362 aa).

75-88 (GPKWANLPPTEQPE) is an NAD(+) binding site. Arg-96, Arg-106, Arg-135, and Asp-224 together coordinate substrate. The Mg(2+) site is built by Asp-224, Asp-248, and Asp-252. Residue 282 to 294 (GSAPDIAGLGVAN) participates in NAD(+) binding.

It belongs to the isocitrate and isopropylmalate dehydrogenases family. LeuB type 1 subfamily. In terms of assembly, homodimer. The cofactor is Mg(2+). Requires Mn(2+) as cofactor.

The protein resides in the cytoplasm. The catalysed reaction is (2R,3S)-3-isopropylmalate + NAD(+) = 4-methyl-2-oxopentanoate + CO2 + NADH. The protein operates within amino-acid biosynthesis; L-leucine biosynthesis; L-leucine from 3-methyl-2-oxobutanoate: step 3/4. Catalyzes the oxidation of 3-carboxy-2-hydroxy-4-methylpentanoate (3-isopropylmalate) to 3-carboxy-4-methyl-2-oxopentanoate. The product decarboxylates to 4-methyl-2 oxopentanoate. The polypeptide is 3-isopropylmalate dehydrogenase (Colwellia psychrerythraea (strain 34H / ATCC BAA-681) (Vibrio psychroerythus)).